The chain runs to 190 residues: MGSVAVEETIVTGMAGRYAQALFSLAKESGTIDQVASDLQRLREIYRESEDLQRFIGSPAFSSEIQVKVLNALLNKVEITGLAANFIKLVAFKRRLFGLPKMIDDFNHLRDVEYGIVRATVTSAAPLKDEQLETLKGVLAAQGGGKSVEIAAKVDPALIGGLIVQLGSRMVDGSLKTKLNAIRTRMKEVG.

It belongs to the ATPase delta chain family. In terms of assembly, F-type ATPases have 2 components, F(1) - the catalytic core - and F(0) - the membrane proton channel. F(1) has five subunits: alpha(3), beta(3), gamma(1), delta(1), epsilon(1). F(0) has three main subunits: a(1), b(2) and c(10-14). The alpha and beta chains form an alternating ring which encloses part of the gamma chain. F(1) is attached to F(0) by a central stalk formed by the gamma and epsilon chains, while a peripheral stalk is formed by the delta and b chains.

It localises to the cell inner membrane. Functionally, f(1)F(0) ATP synthase produces ATP from ADP in the presence of a proton or sodium gradient. F-type ATPases consist of two structural domains, F(1) containing the extramembraneous catalytic core and F(0) containing the membrane proton channel, linked together by a central stalk and a peripheral stalk. During catalysis, ATP synthesis in the catalytic domain of F(1) is coupled via a rotary mechanism of the central stalk subunits to proton translocation. Its function is as follows. This protein is part of the stalk that links CF(0) to CF(1). It either transmits conformational changes from CF(0) to CF(1) or is implicated in proton conduction. In Beijerinckia indica subsp. indica (strain ATCC 9039 / DSM 1715 / NCIMB 8712), this protein is ATP synthase subunit delta.